A 1886-amino-acid chain; its full sequence is Highly reducing polyketide synthase (1886 aa).

In terms of domain architecture, Ketosynthase family 3 (KS3) spans 11-434; it reads TQDVAIVGLS…GANAHAVLDD (424 aa). Active-site for beta-ketoacyl synthase activity residues include C182, H317, and H357. The segment at 483–568 is malonyl-CoA:ACP transacylase (MAT) domain; the sequence is FLFSGQDQQS…VNNDLANTKK (86 aa). The segment at 616-750 is N-terminal hotdog fold; that stretch reads RSLIGAPQPS…GLLSIEYESS (135 aa). A PKS/mFAS DH domain is found at 616–926; that stretch reads RSLIGAPQPS…CTAISEATNP (311 aa). The interval 618-924 is dehydratase (DH) domain; that stretch reads LIGAPQPSYG…LHCTAISEAT (307 aa). The active-site Proton acceptor; for dehydratase activity is H648. The C-terminal hotdog fold stretch occupies residues 778 to 926; it reads HTTQSPKALY…CTAISEATNP (149 aa). Catalysis depends on D838, which acts as the Proton donor; for dehydratase activity. An enoylreductase (ER) domain region spans residues 1169–1480; sequence GMLDEIYFEA…AGKHMGKVAL (312 aa). Residues 1503–1681 are catalytic ketoreductase (KRc) domain; the sequence is ATYVLVGGFG…VSLDLGLMRD (179 aa). The Carrier domain occupies 1802–1879; the sequence is DVTDLVLEIL…DLVDKIVAKS (78 aa). S1839 is modified (O-(pantetheine 4'-phosphoryl)serine).

Its pathway is mycotoxin biosynthesis. In terms of biological role, highly reducing polyketide synthase; part of the gene cluster that mediates the biosynthesis of the selective antifungal agent ascochitine, an o-quinone methide that plays a possible protective role against other microbial competitors in nature and is considered to be important for pathogenicity of legume-associated Didymella species. The pathway probably begins with the synthesis of a keto-aldehyde intermediate by the ascochitine non-reducing polyketide synthase pksAC from successive condensations of 4 malonyl-CoA units, presumably with a simple acetyl-CoA starter unit. Release of the keto-aldehyde intermediate is consistent with the presence of the C-terminal reductive release domain. The HR-PKS (orf7) probably makes a diketide starter unit which is passed to the non-reducing polyketide synthase pksAC for further extension, producing ascochital and ascochitine. The aldehyde dehydrogenase (orf1), the 2-oxoglutarate-dependent dioxygenase (orf3) and the dehydrogenase (orf9) are probably involved in subsequent oxidations of methyl groups to the carboxylic acid of the heterocyclic ring. The ascochitine gene cluster also includes a gene encoding a short peptide with a cupin domain (orf2) that is often found in secondary metabolite gene clusters and which function has still to be determined. This Didymella fabae (Leaf and pod spot disease fungus) protein is Highly reducing polyketide synthase.